Consider the following 640-residue polypeptide: Paramyosin, short form (640 aa).

Nonhelical region stretches follow at residues 1 to 122 (MALA…PDTV) and 420 to 640 (KLEQ…TITE). Residues 123-619 (VERSRQRRRR…IIRAKHRTFV (497 aa)) adopt a coiled-coil conformation.

It belongs to the paramyosin family. Post-translationally, phosphorylated. As to expression, found in all adult muscle tissues except in indirect flight muscles and a set of temporary abdominal muscles. Not detected in larval muscle.

It localises to the cytoplasm. The protein localises to the myofibril. Functionally, paramyosin is a major structural component of many thick filaments isolated from invertebrate muscles. This is Paramyosin, short form (Prm) from Drosophila melanogaster (Fruit fly).